The primary structure comprises 204 residues: 3-isopropylmalate dehydratase small subunit (204 aa).

Belongs to the LeuD family. LeuD type 1 subfamily. Heterodimer of LeuC and LeuD.

The catalysed reaction is (2R,3S)-3-isopropylmalate = (2S)-2-isopropylmalate. The protein operates within amino-acid biosynthesis; L-leucine biosynthesis; L-leucine from 3-methyl-2-oxobutanoate: step 2/4. Functionally, catalyzes the isomerization between 2-isopropylmalate and 3-isopropylmalate, via the formation of 2-isopropylmaleate. This is 3-isopropylmalate dehydratase small subunit from Roseiflexus sp. (strain RS-1).